We begin with the raw amino-acid sequence, 313 residues long: Formimidoylglutamase (313 aa).

Mn(2+)-binding residues include histidine 130, aspartate 155, histidine 157, aspartate 159, aspartate 241, and aspartate 243.

The protein belongs to the arginase family. Mn(2+) serves as cofactor.

It carries out the reaction N-formimidoyl-L-glutamate + H2O = formamide + L-glutamate. The protein operates within amino-acid degradation; L-histidine degradation into L-glutamate; L-glutamate from N-formimidoyl-L-glutamate (hydrolase route): step 1/1. Functionally, catalyzes the conversion of N-formimidoyl-L-glutamate to L-glutamate and formamide. In Salmonella paratyphi B (strain ATCC BAA-1250 / SPB7), this protein is Formimidoylglutamase.